The primary structure comprises 70 residues: UPF0519 protein D (70 aa).

This sequence belongs to the UPF0519 family.

The protein is UPF0519 protein D of Dictyostelium discoideum (Social amoeba).